Reading from the N-terminus, the 166-residue chain is Mitochondrial inner membrane protease subunit 1 (166 aa).

Active-site residues include Ser-40 and Lys-83.

The protein belongs to the peptidase S26 family. IMP1 subfamily. Heterodimer of 2 subunits, IMMPL1 and IMMPL2.

The protein resides in the mitochondrion inner membrane. Functionally, catalyzes the removal of transit peptides required for the targeting of proteins from the mitochondrial matrix, across the inner membrane, into the inter-membrane space. Known to process the nuclear encoded protein DIABLO. The polypeptide is Mitochondrial inner membrane protease subunit 1 (IMMP1L) (Homo sapiens (Human)).